A 1399-amino-acid polypeptide reads, in one-letter code: DNA-directed RNA polymerase subunit beta' (1399 aa).

Zn(2+)-binding residues include cysteine 70, cysteine 72, cysteine 85, and cysteine 88. 3 residues coordinate Mg(2+): aspartate 460, aspartate 462, and aspartate 464. The Zn(2+) site is built by cysteine 814, cysteine 888, cysteine 895, and cysteine 898.

The protein belongs to the RNA polymerase beta' chain family. As to quaternary structure, the RNAP catalytic core consists of 2 alpha, 1 beta, 1 beta' and 1 omega subunit. When a sigma factor is associated with the core the holoenzyme is formed, which can initiate transcription. Mg(2+) is required as a cofactor. Requires Zn(2+) as cofactor.

The catalysed reaction is RNA(n) + a ribonucleoside 5'-triphosphate = RNA(n+1) + diphosphate. DNA-dependent RNA polymerase catalyzes the transcription of DNA into RNA using the four ribonucleoside triphosphates as substrates. This is DNA-directed RNA polymerase subunit beta' from Pseudomonas putida (strain GB-1).